A 135-amino-acid chain; its full sequence is Race-specific elicitor A4 (135 aa).

An N-terminal signal peptide occupies residues 1–18 (MHYTTLLLSTLLVGTALA). Positions 19–29 (QPTNPPAKTPK) are excised as a propeptide. Residues 19–39 (QPTNPPAKTPKKAPKTQPYNP) form a disordered region. The region spanning 47-111 (DTKCMGPKDC…DYPNLSTCPV (65 aa)) is the Chitin-binding type-2 domain. An intrachain disulfide couples C86 to C101. The tract at residues 112–135 (KTPQPKPKKGGVGGKKASVGHPGY) is disordered.

This necrosis-inducing peptide induces a hypersensitive response on Cf-4 tomato genotypes. Race-specific elicitors are compounds which only induce defense responses in genotypes of host plants which are resistant to the pathogenic race that produces the elicitor, but not in susceptible genotypes. This Passalora fulva (Tomato leaf mold) protein is Race-specific elicitor A4 (AVR4).